Reading from the N-terminus, the 356-residue chain is UDP-N-acetylglucosamine--N-acetylmuramyl-(pentapeptide) pyrophosphoryl-undecaprenol N-acetylglucosamine transferase (356 aa).

The UDP-N-acetyl-alpha-D-glucosamine site is built by Arg-166, Ser-196, and Gln-290.

The protein belongs to the glycosyltransferase 28 family. MurG subfamily.

Its subcellular location is the cell membrane. The enzyme catalyses Mur2Ac(oyl-L-Ala-gamma-D-Glu-L-Lys-D-Ala-D-Ala)-di-trans,octa-cis-undecaprenyl diphosphate + UDP-N-acetyl-alpha-D-glucosamine = beta-D-GlcNAc-(1-&gt;4)-Mur2Ac(oyl-L-Ala-gamma-D-Glu-L-Lys-D-Ala-D-Ala)-di-trans,octa-cis-undecaprenyl diphosphate + UDP + H(+). The protein operates within cell wall biogenesis; peptidoglycan biosynthesis. In terms of biological role, cell wall formation. Catalyzes the transfer of a GlcNAc subunit on undecaprenyl-pyrophosphoryl-MurNAc-pentapeptide (lipid intermediate I) to form undecaprenyl-pyrophosphoryl-MurNAc-(pentapeptide)GlcNAc (lipid intermediate II). In Staphylococcus aureus (strain USA300), this protein is UDP-N-acetylglucosamine--N-acetylmuramyl-(pentapeptide) pyrophosphoryl-undecaprenol N-acetylglucosamine transferase.